The following is a 263-amino-acid chain: Nitrogenase iron protein 2 (263 aa).

ATP is bound at residue 9–16; the sequence is GKGGIGKS. C92 serves as a coordination point for [4Fe-4S] cluster. R95 carries the post-translational modification ADP-ribosylarginine; by dinitrogenase reductase ADP-ribosyltransferase. C127 contributes to the [4Fe-4S] cluster binding site.

The protein belongs to the NifH/BchL/ChlL family. As to quaternary structure, homodimer. It depends on [4Fe-4S] cluster as a cofactor. In terms of processing, the reversible ADP-ribosylation of Arg-95 inactivates the nitrogenase reductase and regulates nitrogenase activity.

The catalysed reaction is N2 + 8 reduced [2Fe-2S]-[ferredoxin] + 16 ATP + 16 H2O = H2 + 8 oxidized [2Fe-2S]-[ferredoxin] + 2 NH4(+) + 16 ADP + 16 phosphate + 6 H(+). Its function is as follows. The key enzymatic reactions in nitrogen fixation are catalyzed by the nitrogenase complex, which has 2 components: the iron protein and the molybdenum-iron protein. The protein is Nitrogenase iron protein 2 (nifH2) of Methanobacterium ivanovii.